An 85-amino-acid polypeptide reads, in one-letter code: Large ribosomal subunit protein bL27 (85 aa).

The tract at residues 1 to 20 (MAHKKAGGSTRNGRDSEAKR) is disordered.

Belongs to the bacterial ribosomal protein bL27 family.

The polypeptide is Large ribosomal subunit protein bL27 (Proteus mirabilis (strain HI4320)).